A 160-amino-acid chain; its full sequence is Small ribosomal subunit protein bS6 (160 aa).

Belongs to the bacterial ribosomal protein bS6 family.

Binds together with bS18 to 16S ribosomal RNA. The protein is Small ribosomal subunit protein bS6 of Ureaplasma urealyticum serovar 10 (strain ATCC 33699 / Western).